Reading from the N-terminus, the 220-residue chain is Inner membrane-spanning protein YciB (220 aa).

6 consecutive transmembrane segments (helical) span residues 20–40 (EVPP…FFFA), 57–77 (IGAP…IALA), 86–106 (LPIM…LTLW), 123–143 (LFGG…GYVF), 156–176 (KLTL…EIVW), and 187–207 (FKVW…MPLI).

The protein belongs to the YciB family.

The protein resides in the cell inner membrane. In terms of biological role, plays a role in cell envelope biogenesis, maintenance of cell envelope integrity and membrane homeostasis. The sequence is that of Inner membrane-spanning protein YciB from Brucella melitensis biotype 2 (strain ATCC 23457).